The following is a 395-amino-acid chain: RNA polymerase II elongation factor ELL3 (395 aa).

Disordered stretches follow at residues 129 to 177 and 189 to 281; these read LTEG…SEPM and PSRE…SPEE. Phosphoserine is present on Ser242. Acidic residues predominate over residues 243-260; that stretch reads QEGEDWGQDEDEEGDEDG. Over residues 269 to 279 the composition is skewed to low complexity; that stretch reads SAPSASESPSP. The 111-residue stretch at 283–393 folds into the OCEL domain; the sequence is PDYLLQYRAI…LILEFEEKNR (111 aa).

The protein belongs to the ELL/occludin family. Component of the little elongation complex (LEC), at least composed of ELL (ELL, ELL2 or ELL3), ZC3H8, ICE1 and ICE2. Component of the super elongation complex (SEC), at least composed of EAF1, EAF2, CDK9, MLLT3/AF9, AFF (AFF1 or AFF4), the P-TEFb complex and ELL (ELL, ELL2 or ELL3). Interacts with AFF4. In terms of tissue distribution, actively expressed in embryonic stem cells (ES cells), while it is weakly expressed in differentiated cells.

It localises to the nucleus. In terms of biological role, enhancer-binding elongation factor that specifically binds enhancers in embryonic stem cells (ES cells), marks them, and is required for their future activation during stem cell specification. Elongation factor component of the super elongation complex (SEC), a complex required to increase the catalytic rate of RNA polymerase II transcription by suppressing transient pausing by the polymerase at multiple sites along the DNA. Component of the little elongation complex (LEC), a complex required to regulate small nuclear RNA (snRNA) gene transcription by RNA polymerase II and III. Does not only bind to enhancer regions of active genes, but also marks the enhancers that are in a poised or inactive state in ES cells and is required for establishing proper RNA polymerase II occupancy at developmentally regulated genes in a cohesin-dependent manner. Probably required for priming developmentally regulated genes for later recruitment of the super elongation complex (SEC), for transcriptional activation during differentiation. Required for recruitment of P-TEFb within SEC during differentiation. Probably preloaded on germ cell chromatin, suggesting that it may prime gene activation by marking enhancers as early as in the germ cells. Promoting epithelial-mesenchymal transition (EMT). The sequence is that of RNA polymerase II elongation factor ELL3 (Ell3) from Mus musculus (Mouse).